We begin with the raw amino-acid sequence, 209 residues long: PRA1 family protein A1 (209 aa).

4 helical membrane passes run 51–73 (LYYY…VLTR), 77–99 (IFAA…GSFS), 144–164 (VFVL…SGLL), and 166–186 (VSVA…LRTP).

The protein belongs to the PRA1 family.

Its subcellular location is the endoplasmic reticulum membrane. In terms of biological role, may be involved in both secretory and endocytic intracellular trafficking in the endosomal/prevacuolar compartments. The chain is PRA1 family protein A1 (PRA1A1) from Arabidopsis thaliana (Mouse-ear cress).